Reading from the N-terminus, the 152-residue chain is Ribosome maturation factor RimP (152 aa).

The protein belongs to the RimP family.

It localises to the cytoplasm. Its function is as follows. Required for maturation of 30S ribosomal subunits. The sequence is that of Ribosome maturation factor RimP from Burkholderia vietnamiensis (strain G4 / LMG 22486) (Burkholderia cepacia (strain R1808)).